A 194-amino-acid polypeptide reads, in one-letter code: Holliday junction branch migration complex subunit RuvA (194 aa).

The interval 1–63 (MFEYMKGMIV…EDEAHLYGFV (63 aa)) is domain I. The tract at residues 64-142 (DKEELAMFKK…DSQVEYDQNF (79 aa)) is domain II. The segment at 143 to 146 (FNHE) is flexible linker. The domain III stretch occupies residues 146–194 (ENKNNNEVVDALMALGYTKHEGEQAASAVRDTSLSTEEMIRKALNWLAR).

The protein belongs to the RuvA family. Homotetramer. Forms an RuvA(8)-RuvB(12)-Holliday junction (HJ) complex. HJ DNA is sandwiched between 2 RuvA tetramers; dsDNA enters through RuvA and exits via RuvB. An RuvB hexamer assembles on each DNA strand where it exits the tetramer. Each RuvB hexamer is contacted by two RuvA subunits (via domain III) on 2 adjacent RuvB subunits; this complex drives branch migration. In the full resolvosome a probable DNA-RuvA(4)-RuvB(12)-RuvC(2) complex forms which resolves the HJ.

The protein resides in the cytoplasm. Functionally, the RuvA-RuvB-RuvC complex processes Holliday junction (HJ) DNA during genetic recombination and DNA repair, while the RuvA-RuvB complex plays an important role in the rescue of blocked DNA replication forks via replication fork reversal (RFR). RuvA specifically binds to HJ cruciform DNA, conferring on it an open structure. The RuvB hexamer acts as an ATP-dependent pump, pulling dsDNA into and through the RuvAB complex. HJ branch migration allows RuvC to scan DNA until it finds its consensus sequence, where it cleaves and resolves the cruciform DNA. The sequence is that of Holliday junction branch migration complex subunit RuvA from Alkaliphilus metalliredigens (strain QYMF).